The primary structure comprises 182 residues: Segregation and condensation protein B (182 aa).

This sequence belongs to the ScpB family. In terms of assembly, homodimer. Homodimerization may be required to stabilize the binding of ScpA to the Smc head domains. Component of a cohesin-like complex composed of ScpA, ScpB and the Smc homodimer, in which ScpA and ScpB bind to the head domain of Smc. The presence of the three proteins is required for the association of the complex with DNA.

The protein resides in the cytoplasm. In terms of biological role, participates in chromosomal partition during cell division. May act via the formation of a condensin-like complex containing Smc and ScpA that pull DNA away from mid-cell into both cell halves. This chain is Segregation and condensation protein B, found in Staphylococcus saprophyticus subsp. saprophyticus (strain ATCC 15305 / DSM 20229 / NCIMB 8711 / NCTC 7292 / S-41).